A 160-amino-acid polypeptide reads, in one-letter code: Transcriptional repressor NrdR (160 aa).

Positions 1–11 are enriched in polar residues; that stretch reads MRCPNCNSLDT. The disordered stretch occupies residues 1–20; sequence MRCPNCNSLDTQVKDSRPTE. The segment at 3-34 is a zinc-finger region; that stretch reads CPNCNSLDTQVKDSRPTEDSSVIRRRRVCIAC. Residues 49-139 form the ATP-cone domain; it reads LTVIKRNGRR…VYRNFREAKD (91 aa).

Belongs to the NrdR family. It depends on Zn(2+) as a cofactor.

In terms of biological role, negatively regulates transcription of bacterial ribonucleotide reductase nrd genes and operons by binding to NrdR-boxes. The chain is Transcriptional repressor NrdR from Rhodopseudomonas palustris (strain HaA2).